Here is a 348-residue protein sequence, read N- to C-terminus: Replication-associated protein (348 aa).

Over residues 1-17 (MRAPASSAASNRPGPSN) the composition is skewed to low complexity. Residues 1-22 (MRAPASSAASNRPGPSNHPTPR) are disordered. Residues 22-125 (RWNSKQFFLT…NGDSDEMGEL (104 aa)) enclose the CRESS-DNA virus Rep endonuclease domain. The RCR-1 motif lies at 29–32 (FLTY). 3 residues coordinate a divalent metal cation: Glu63, His71, and His73. The short motif at 71-73 (HLH) is the RCR-2 element. The For DNA cleavage activity role is filled by Tyr111. An RCR-3 motif is present at residues 111–114 (YISK). The segment at 176 to 188 (SAAALFTEPPPVY) is oligomerization. ATP is bound at residue 228–235 (GPSRTGKT). Residues 251 to 269 (VDFTHYDKDAIYNVIDDVP) are transactivation. A Nuclear localization signal motif is present at residues 291–301 (KYGKKKKIPGG).

The protein belongs to the geminiviridae Rep protein family. As to quaternary structure, homooligomer. Rep binds to repeated DNA motifs (iterons). Forms the O-complex, which is a Rep-DNA complex involved in the initiation of RCR. Part of the C- and V-complexes which are RepA-Rep-DNA complexes involved in the c-sense and v-sense transcription. Mg(2+) is required as a cofactor. Requires Mn(2+) as cofactor.

It localises to the host nucleus. In terms of biological role, essential for the replication of viral ssDNA. The closed circular ssDNA genome is first converted to a superhelical dsDNA. Rep binds a specific region at the genome origin of replication. It introduces an endonucleolytic nick within the conserved sequence 5'-TAATATTAC-3' in the intergenic region of the genome present in all geminiviruses, thereby initiating the rolling circle replication (RCR). Following cleavage, binds covalently to the 5'-phosphate of DNA as a tyrosyl ester. The cleavage gives rise to a free 3'-OH that serves as a primer for the cellular DNA polymerase. The polymerase synthesizes the (+) strand DNA by rolling circle mechanism. After one round of replication, a Rep-catalyzed nucleotidyl transfer reaction releases a circular single-stranded virus genome, thereby terminating the replication. Displays origin-specific DNA cleavage, nucleotidyl transferase, ATPase and helicase activities. Acts as an inhibitor of C-sense gene transcription. In Miscanthus streak virus (isolate 91) (MiSV), this protein is Replication-associated protein.